The primary structure comprises 316 residues: uncharacterized protein (316 aa).

To yeast YGR277c.

This is an uncharacterized protein from Schizosaccharomyces pombe (strain 972 / ATCC 24843) (Fission yeast).